We begin with the raw amino-acid sequence, 255 residues long: Acetylglutamate kinase (255 aa).

Substrate-binding positions include 40-41 (GG), Arg62, and Asn153.

This sequence belongs to the acetylglutamate kinase family. ArgB subfamily.

It localises to the cytoplasm. The enzyme catalyses N-acetyl-L-glutamate + ATP = N-acetyl-L-glutamyl 5-phosphate + ADP. The protein operates within amino-acid biosynthesis; L-arginine biosynthesis; N(2)-acetyl-L-ornithine from L-glutamate: step 2/4. Catalyzes the ATP-dependent phosphorylation of N-acetyl-L-glutamate. This Bacillus cereus (strain AH187) protein is Acetylglutamate kinase.